The sequence spans 529 residues: L-ornithine N(5)-monooxygenase (529 aa).

FAD-binding positions include glutamate 100–histidine 108 and glutamine 119. A substrate-binding site is contributed by lysine 124. Valine 185 provides a ligand contact to FAD. Asparagine 270–serine 273 is an NADP(+) binding site. Substrate-binding positions include asparagine 309–phenylalanine 312 and asparagine 339. Asparagine 339–glycine 341 is an NADP(+) binding site. Threonine 493–leucine 495 contacts FAD. Residue serine 496 participates in substrate binding.

It belongs to the lysine N(6)-hydroxylase/L-ornithine N(5)-oxygenase family. Homotetramer. FAD is required as a cofactor.

It catalyses the reaction L-ornithine + NADPH + O2 = N(5)-hydroxy-L-ornithine + NADP(+) + H2O. It carries out the reaction L-ornithine + NADH + O2 = N(5)-hydroxy-L-ornithine + NAD(+) + H2O. It functions in the pathway siderophore biosynthesis. Functionally, L-ornithine N(5)-monooxygenase; part of the gene cluster that mediates the biosynthesis of hydroxamate-containing siderophores that play a critical role in virulence. Cochliobolus heterostrophus produces extracellular coprogen-type siderophores including coprogen, neocoprogen I and neocoprogen II, as well as the intracellular siderophore ferricrocin. The role of extracellular siderophores is to supply iron to their producers in planta and the intracellular ferricrocin is required for intracellular iron distribution and storage with a crucial role in ascus and ascospore development. SIDA2 catalyzes the conversion of L-ornithine to N(5)-hydroxyornithine, the first step in the biosynthesis of all hydroxamate-containing siderophores. The assembly of extracellular coprogen-type siderophores is then performed by the nonribosomal peptide synthetase (NRPS) NPS6 whereas the intracellular siderophore ferricrocin is assembled by NPS2. This is L-ornithine N(5)-monooxygenase from Cochliobolus heterostrophus (strain C4 / ATCC 48331 / race T) (Southern corn leaf blight fungus).